The sequence spans 158 residues: Cyclic pyranopterin monophosphate synthase (158 aa).

Substrate contacts are provided by residues 73–75 and 110–111; these read LCH and ME. Residue Asp-125 is part of the active site.

It belongs to the MoaC family. Homohexamer; trimer of dimers.

It carries out the reaction (8S)-3',8-cyclo-7,8-dihydroguanosine 5'-triphosphate = cyclic pyranopterin phosphate + diphosphate. It participates in cofactor biosynthesis; molybdopterin biosynthesis. Its function is as follows. Catalyzes the conversion of (8S)-3',8-cyclo-7,8-dihydroguanosine 5'-triphosphate to cyclic pyranopterin monophosphate (cPMP). This is Cyclic pyranopterin monophosphate synthase from Azotobacter vinelandii (strain DJ / ATCC BAA-1303).